The primary structure comprises 423 residues: Serine hydroxymethyltransferase (423 aa).

A (6S)-5,6,7,8-tetrahydrofolate-binding site is contributed by 121-123 (GHI). Lysine 227 carries the N6-(pyridoxal phosphate)lysine modification. (6S)-5,6,7,8-tetrahydrofolate is bound at residue glutamate 242.

This sequence belongs to the SHMT family. In terms of assembly, homodimer. It depends on pyridoxal 5'-phosphate as a cofactor.

The protein resides in the cytoplasm. It catalyses the reaction 5,10-methylenetetrahydromethanopterin + glycine + H2O = 5,6,7,8-tetrahydromethanopterin + L-serine. Its pathway is amino-acid biosynthesis; glycine biosynthesis; glycine from L-serine: step 1/1. Functionally, catalyzes the reversible interconversion of serine and glycine with tetrahydromethanopterin (H4MPT) serving as the one-carbon carrier. Also exhibits a pteridine-independent aldolase activity toward beta-hydroxyamino acids, producing glycine and aldehydes, via a retro-aldol mechanism. The sequence is that of Serine hydroxymethyltransferase from Methanothermobacter marburgensis (strain ATCC BAA-927 / DSM 2133 / JCM 14651 / NBRC 100331 / OCM 82 / Marburg) (Methanobacterium thermoautotrophicum).